The chain runs to 338 residues: Ketol-acid reductoisomerase (NADP(+)) (338 aa).

Residues 1 to 181 (MKVFYDKDCD…GGGRAGIIET (181 aa)) form the KARI N-terminal Rossmann domain. NADP(+) contacts are provided by residues 24-27 (YGSQ), Arg47, and Ser52. His107 is a catalytic residue. Gly133 contacts NADP(+). The KARI C-terminal knotted domain maps to 182-327 (NFREETETDL…GKLRAMMPWI (146 aa)). Residues Asp190, Glu194, Glu226, and Glu230 each coordinate Mg(2+). Ser251 serves as a coordination point for substrate.

Belongs to the ketol-acid reductoisomerase family. Mg(2+) serves as cofactor.

It catalyses the reaction (2R)-2,3-dihydroxy-3-methylbutanoate + NADP(+) = (2S)-2-acetolactate + NADPH + H(+). It carries out the reaction (2R,3R)-2,3-dihydroxy-3-methylpentanoate + NADP(+) = (S)-2-ethyl-2-hydroxy-3-oxobutanoate + NADPH + H(+). It functions in the pathway amino-acid biosynthesis; L-isoleucine biosynthesis; L-isoleucine from 2-oxobutanoate: step 2/4. It participates in amino-acid biosynthesis; L-valine biosynthesis; L-valine from pyruvate: step 2/4. In terms of biological role, involved in the biosynthesis of branched-chain amino acids (BCAA). Catalyzes an alkyl-migration followed by a ketol-acid reduction of (S)-2-acetolactate (S2AL) to yield (R)-2,3-dihydroxy-isovalerate. In the isomerase reaction, S2AL is rearranged via a Mg-dependent methyl migration to produce 3-hydroxy-3-methyl-2-ketobutyrate (HMKB). In the reductase reaction, this 2-ketoacid undergoes a metal-dependent reduction by NADPH to yield (R)-2,3-dihydroxy-isovalerate. The chain is Ketol-acid reductoisomerase (NADP(+)) from Bordetella bronchiseptica (strain ATCC BAA-588 / NCTC 13252 / RB50) (Alcaligenes bronchisepticus).